The following is a 578-amino-acid chain: Probable methylcrotonoyl-CoA carboxylase beta chain, mitochondrial (578 aa).

A mitochondrion-targeting transit peptide spans 1–29 (MIRLNWLFRSSSVLLRSQVRLLHVGDANV). In terms of domain architecture, CoA carboxyltransferase N-terminal spans 48-305 (MASLVGDLRN…SATNSYNDQL (258 aa)). Residues 48 to 570 (MASLVGDLRN…KAALNNAGQE (523 aa)) are carboxyltransferase. The CoA carboxyltransferase C-terminal domain occupies 321-570 (AVEEPRYDAE…KAALNNAGQE (250 aa)). Residues 355 to 388 (DGSRFTEFKKLYGETLVCGFAKLYGHTVGIVGNN) are acyl-CoA binding.

Belongs to the AccD/PCCB family. As to expression, expressed in third instar larval ring gland (lateral and medial secretory cells and corpus cardiacum cells) and CNS.

It localises to the mitochondrion matrix. It carries out the reaction 3-methylbut-2-enoyl-CoA + hydrogencarbonate + ATP = 3-methyl-(2E)-glutaconyl-CoA + ADP + phosphate + H(+). It functions in the pathway amino-acid degradation; L-leucine degradation; (S)-3-hydroxy-3-methylglutaryl-CoA from 3-isovaleryl-CoA: step 2/3. In terms of biological role, carboxyltransferase subunit of the 3-methylcrotonyl-CoA carboxylase, an enzyme that catalyzes the conversion of 3-methylcrotonyl-CoA to 3-methylglutaconyl-CoA, a critical step for leucine and isovaleric acid catabolism. Vital for adult survival. The polypeptide is Probable methylcrotonoyl-CoA carboxylase beta chain, mitochondrial (Drosophila melanogaster (Fruit fly)).